We begin with the raw amino-acid sequence, 67 residues long: Large ribosomal subunit protein uL29 (67 aa).

It belongs to the universal ribosomal protein uL29 family.

The sequence is that of Large ribosomal subunit protein uL29 from Alkaliphilus metalliredigens (strain QYMF).